Here is a 350-residue protein sequence, read N- to C-terminus: MIQIKNLKKEYRTNNTSNLVLDNINLEIKQGEIFGIIGHSGAGKSSLLRCLNLLEQPTDGSIFIADENITKKNSKQLREFRKKVAMIFQHFNLLSSRNVFENIALPLEIQGIPKSEIKKRVFELLDLVELPNKANAYPQELSGGQKQKVAIARALALNPLVLLSDEATSALDPTSTKQILALLKILNKELGLTIVLITHEMDVVRKICDRVAIIDKGRIAEMGKTLDVFLNPQAPVTRSFVETSIHTKVPDFIAKKLQDNPYSYDNTYPVVQLTFYGDKGKMPIIAEISRQFNATASIIQANIETIQDQIVGIAICHITGERQGWENALRFLSNQDVNLKVLGYATADNI.

Residues 2–241 form the ABC transporter domain; it reads IQIKNLKKEY…PQAPVTRSFV (240 aa). ATP is bound at residue 38 to 45; that stretch reads GHSGAGKS.

It belongs to the ABC transporter superfamily. Methionine importer (TC 3.A.1.24) family. As to quaternary structure, the complex is composed of two ATP-binding proteins (MetN), two transmembrane proteins (MetI) and a solute-binding protein (MetQ).

Its subcellular location is the cell inner membrane. It carries out the reaction L-methionine(out) + ATP + H2O = L-methionine(in) + ADP + phosphate + H(+). It catalyses the reaction D-methionine(out) + ATP + H2O = D-methionine(in) + ADP + phosphate + H(+). Its function is as follows. Part of the ABC transporter complex MetNIQ involved in methionine import. Responsible for energy coupling to the transport system. The protein is Methionine import ATP-binding protein MetN of Francisella tularensis subsp. tularensis (strain SCHU S4 / Schu 4).